The primary structure comprises 175 residues: Peptide deformylase (175 aa).

2 residues coordinate Fe cation: Cys-98 and His-140. The active site involves Glu-141. His-144 lines the Fe cation pocket.

The protein belongs to the polypeptide deformylase family. Fe(2+) serves as cofactor.

It carries out the reaction N-terminal N-formyl-L-methionyl-[peptide] + H2O = N-terminal L-methionyl-[peptide] + formate. Removes the formyl group from the N-terminal Met of newly synthesized proteins. Requires at least a dipeptide for an efficient rate of reaction. N-terminal L-methionine is a prerequisite for activity but the enzyme has broad specificity at other positions. This is Peptide deformylase from Bradyrhizobium sp. (strain ORS 278).